Consider the following 255-residue polypeptide: Probable UDP-N-acetylglucosamine pyrophosphorylase (255 aa).

It carries out the reaction N-acetyl-alpha-D-glucosamine 1-phosphate + UTP + H(+) = UDP-N-acetyl-alpha-D-glucosamine + diphosphate. Its pathway is nucleotide-sugar biosynthesis; UDP-N-acetyl-alpha-D-glucosamine biosynthesis; UDP-N-acetyl-alpha-D-glucosamine from N-acetyl-alpha-D-glucosamine 1-phosphate: step 1/1. This is Probable UDP-N-acetylglucosamine pyrophosphorylase from Acanthamoeba polyphaga (Amoeba).